Here is a 566-residue protein sequence, read N- to C-terminus: Urease subunit alpha (566 aa).

The 438-residue stretch at 129–566 (GGVDTHIHFI…LPLAQRYFLF (438 aa)) folds into the Urease domain. Residues histidine 134, histidine 136, and lysine 217 each coordinate Ni(2+). An N6-carboxylysine modification is found at lysine 217. Histidine 219 is a binding site for substrate. Residues histidine 246 and histidine 272 each coordinate Ni(2+). The Proton donor role is filled by histidine 320. Aspartate 360 serves as a coordination point for Ni(2+).

It belongs to the metallo-dependent hydrolases superfamily. Urease alpha subunit family. As to quaternary structure, heterotrimer of UreA (gamma), UreB (beta) and UreC (alpha) subunits. Three heterotrimers associate to form the active enzyme. The cofactor is Ni cation. Carboxylation allows a single lysine to coordinate two nickel ions.

The protein resides in the cytoplasm. It carries out the reaction urea + 2 H2O + H(+) = hydrogencarbonate + 2 NH4(+). It participates in nitrogen metabolism; urea degradation; CO(2) and NH(3) from urea (urease route): step 1/1. This Janthinobacterium sp. (strain Marseille) (Minibacterium massiliensis) protein is Urease subunit alpha.